A 346-amino-acid polypeptide reads, in one-letter code: Annexin A1 (346 aa).

Position 2 is an N-acetylalanine (Ala2). Residue Ser5 is modified to Phosphoserine; by TRPM7. An Isoglutamyl lysine isopeptide (Gln-Lys) (interchain with K-?) cross-link involves residue Gln19. Phosphotyrosine is present on Tyr21. Phosphoserine; by PKC is present on Ser27. Phosphoserine occurs at positions 34 and 37. 4 Annexin repeats span residues 42–113 (FNVS…AMLK), 114–185 (TPAQ…ALAK), 197–269 (DLAD…TIVK), and 273–344 (STPA…ALCG). Lys58 bears the N6-acetyllysine mark. The Ca(2+) site is built by Gly59, Val60, Glu62, Arg97, Leu100, Glu105, Met127, Gly129, Gly131, Thr132, and Glu134. Residue Thr136 is modified to Phosphothreonine. Positions 171, 210, and 213 each coordinate Ca(2+). Residue Lys214 forms a Glycyl lysine isopeptide (Lys-Gly) (interchain with G-Cter in SUMO1); alternate linkage. Residue Lys214 forms a Glycyl lysine isopeptide (Lys-Gly) (interchain with G-Cter in SUMO2); alternate linkage. Ca(2+) is bound by residues Gly215, Asp253, Glu255, and Leu256. A Glycyl lysine isopeptide (Lys-Gly) (interchain with G-Cter in SUMO1) cross-link involves residue Lys257. Residues Glu261, Met286, Gly288, and Gly290 each coordinate Ca(2+). The residue at position 312 (Lys312) is an N6-acetyllysine. A disulfide bond links Cys324 and Cys343. Positions 328, 330, and 331 each coordinate Ca(2+). A Glycyl lysine isopeptide (Lys-Gly) (interchain with G-Cter in SUMO1) cross-link involves residue Lys332. A Ca(2+)-binding site is contributed by Glu336.

Belongs to the annexin family. As to quaternary structure, homodimer; non-covalently linked. Homodimer; linked by transglutamylation. Homodimers linked by transglutamylation are observed in placenta, but not in other tissues. Interacts with S100A11. Heterotetramer, formed by two molecules each of S100A11 and ANXA1. Interacts with DYSF. Interacts with EGFR. Phosphorylated by protein kinase C, EGFR and TRPM7. Phosphorylated in response to EGF treatment. In terms of processing, sumoylated. Post-translationally, proteolytically cleaved by cathepsin CTSG to release the active N-terminal peptide Ac2-26. As to expression, detected in lung. Detected at the apical membrane of airway epithelial cells. Detected in intestinal epithelial cells. Detected in skeletal muscle. Detected in prostate. Detected in thymus (at protein level). Detected in stomach, lung, spleen, ovary and uterus, and at lower levels in kidney, thymus and heart.

It localises to the nucleus. It is found in the cytoplasm. The protein localises to the cell projection. The protein resides in the cilium. Its subcellular location is the basolateral cell membrane. It localises to the lateral cell membrane. It is found in the cell membrane. The protein localises to the apical cell membrane. The protein resides in the membrane. Its subcellular location is the early endosome. It localises to the cytoplasmic vesicle membrane. It is found in the endosome membrane. The protein localises to the secreted. The protein resides in the extracellular space. Its subcellular location is the extracellular exosome. It localises to the cytoplasmic vesicle. It is found in the secretory vesicle lumen. The protein localises to the phagocytic cup. Its function is as follows. Plays important roles in the innate immune response as effector of glucocorticoid-mediated responses and regulator of the inflammatory process. Has anti-inflammatory activity. Plays a role in glucocorticoid-mediated down-regulation of the early phase of the inflammatory response. Contributes to the adaptive immune response by enhancing signaling cascades that are triggered by T-cell activation, regulates differentiation and proliferation of activated T-cells. Promotes the differentiation of T-cells into Th1 cells and negatively regulates differentiation into Th2 cells. Has no effect on unstimulated T-cells. Negatively regulates hormone exocytosis via activation of the formyl peptide receptors and reorganization of the actin cytoskeleton. Has high affinity for Ca(2+) and can bind up to eight Ca(2+) ions. Displays Ca(2+)-dependent binding to phospholipid membranes. Plays a role in the formation of phagocytic cups and phagosomes. Plays a role in phagocytosis by mediating the Ca(2+)-dependent interaction between phagosomes and the actin cytoskeleton. Functionally, functions at least in part by activating the formyl peptide receptors and downstream signaling cascades. Promotes chemotaxis of granulocytes and monocytes via activation of the formyl peptide receptors. Promotes rearrangement of the actin cytoskeleton, cell polarization and cell migration. Promotes resolution of inflammation and wound healing. Acts via neutrophil N-formyl peptide receptors to enhance the release of CXCL2. In Mus musculus (Mouse), this protein is Annexin A1 (Anxa1).